The sequence spans 397 residues: Multidrug efflux pump subunit AcrA (397 aa).

The first 24 residues, 1-24 (MNKNRGFTPLAVVLMLSGSLALTG), serve as a signal peptide directing secretion. Cys-25 carries N-palmitoyl cysteine lipidation. A lipid anchor (S-diacylglycerol cysteine) is attached at Cys-25. A coiled-coil region spans residues 98-172 (PATYQATYDS…AVETARINLA (75 aa)). Residues 377–397 (EVTADNNQQAASGAQPEQSKS) are disordered. Polar residues predominate over residues 379–397 (TADNNQQAASGAQPEQSKS).

It belongs to the membrane fusion protein (MFP) (TC 8.A.1) family. Monomeric in solution. Homotrimeric; interacts independently with AcrB and TolC as well as AcrZ. Part of the AcrA-AcrB-TolC efflux pump.

It localises to the cell inner membrane. Functionally, acrA-AcrB-AcrZ-TolC is a drug efflux protein complex with broad substrate specificity that uses the proton motive force to export substrates. This subunit may act as an adapter protein that links AcrB and TolC stably together. The polypeptide is Multidrug efflux pump subunit AcrA (acrA) (Escherichia coli O157:H7).